Consider the following 624-residue polypeptide: Ceramide transfer protein (624 aa).

The segment covering 1-11 (MSDNQSWNSSG) has biased composition (polar residues). Positions 1 to 24 (MSDNQSWNSSGSEEDPETESGPPV) are disordered. The PH domain occupies 23–117 (PVERCGVLSK…WVDAIEQHKT (95 aa)). 3 positions are modified to phosphoserine: Ser126, Ser132, and Ser135. The tract at residues 202-221 (DDEDDFPTTRSDGDFLHNTN) is disordered. The stretch at 263–303 (IELMVKREESWQKRHDREVEKRRRVEEAYKNVMEELKKKPR) forms a coiled coil. Position 315 is a phosphoserine (Ser315). Residues 321–327 (EFFDAVE) carry the FFAT motif. Tyr372 carries the phosphotyrosine modification. A phosphoserine mark is found at Ser373, Ser377, and Ser380. The START domain occupies 389 to 618 (DVHRFSSQVE…FTSYVQEKTA (230 aa)). Residues Glu472, Gln493, Asn530, and Tyr579 each contribute to the an N-acylsphing-4-enine site.

In terms of assembly, interacts with VAPA and VAPB. Interaction with VAPB is less efficient than with VAPA. Interacts (via FFAT motif) with MOSPD2 (via MSP domain). Phosphorylation on Ser-132 decreases the affinity toward phosphatidylinositol 4-phosphate at Golgi membranes and reduces ceramide transfer activity. Inactivated by hyperphosphorylation of serine residues by CSNK1G2/CK1 that triggers dissociation from the Golgi complex, thus down-regulating ER-to-Golgi transport of ceramide and sphingomyelin synthesis.

Its subcellular location is the cytoplasm. The protein resides in the golgi apparatus. It localises to the endoplasmic reticulum. The catalysed reaction is N-hexadecanoylsphing-4-enine(in) = N-hexadecanoylsphing-4-enine(out). Shelters ceramides and diacylglycerol lipids inside its START domain and mediates the intracellular trafficking of ceramides and diacylglycerol lipids in a non-vesicular manner. The protein is Ceramide transfer protein (Cert1) of Mus musculus (Mouse).